Consider the following 222-residue polypeptide: Chorionic somatomammotropin hormone-like 1 (222 aa).

Residues 1–26 form the signal peptide; sequence MAAGSRTSLLLAFALLCLPWLQEAGA. 2 residues coordinate Zn(2+): histidine 44 and glutamate 205. Residues cysteine 213 and cysteine 220 are joined by a disulfide bond.

The protein belongs to the somatotropin/prolactin family.

It localises to the secreted. May be a novel gestational hormone required to compensate for absence of other members of the GH/CS cluster during gestation. The polypeptide is Chorionic somatomammotropin hormone-like 1 (CSHL1) (Homo sapiens (Human)).